The chain runs to 276 residues: Hydroxyethylthiazole kinase (276 aa).

Position 48 (methionine 48) interacts with substrate. Arginine 124 and threonine 175 together coordinate ATP. Substrate is bound at residue glycine 202.

It belongs to the Thz kinase family. Mg(2+) serves as cofactor.

The catalysed reaction is 5-(2-hydroxyethyl)-4-methylthiazole + ATP = 4-methyl-5-(2-phosphooxyethyl)-thiazole + ADP + H(+). Its pathway is cofactor biosynthesis; thiamine diphosphate biosynthesis; 4-methyl-5-(2-phosphoethyl)-thiazole from 5-(2-hydroxyethyl)-4-methylthiazole: step 1/1. Its function is as follows. Catalyzes the phosphorylation of the hydroxyl group of 4-methyl-5-beta-hydroxyethylthiazole (THZ). This chain is Hydroxyethylthiazole kinase, found in Clostridium beijerinckii (strain ATCC 51743 / NCIMB 8052) (Clostridium acetobutylicum).